A 333-amino-acid polypeptide reads, in one-letter code: Homocysteine S-methyltransferase 2 (333 aa).

The Hcy-binding domain maps to 8-327 (SMKDFLKQTG…TTIRAIHKRL (320 aa)). Residues C245, C312, and C313 each contribute to the Zn(2+) site.

Monomer. Requires Zn(2+) as cofactor. In terms of tissue distribution, expressed predominantly in roots. Expressed in rosette leaves, cauline leaves and developing seeds.

It catalyses the reaction S-methyl-L-methionine + L-homocysteine = 2 L-methionine + H(+). Functionally, catalyzes methyl transfer from S-methylmethionine (SMM) to adenosyl-L-homocysteine (AdoMet). SMM degradation (by HMT-1, HMT-2 and HMT-3) and biosynthesis (by MMT1) constitute the SMM cycle in plants, which is probably required to achieve short term control of AdoMet level. This is Homocysteine S-methyltransferase 2 (HMT-2) from Arabidopsis thaliana (Mouse-ear cress).